We begin with the raw amino-acid sequence, 370 residues long: 4-hydroxy-3-methylbut-2-en-1-yl diphosphate synthase (flavodoxin) (370 aa).

4 residues coordinate [4Fe-4S] cluster: C270, C273, C305, and E312.

It belongs to the IspG family. The cofactor is [4Fe-4S] cluster.

It catalyses the reaction (2E)-4-hydroxy-3-methylbut-2-enyl diphosphate + oxidized [flavodoxin] + H2O + 2 H(+) = 2-C-methyl-D-erythritol 2,4-cyclic diphosphate + reduced [flavodoxin]. Its pathway is isoprenoid biosynthesis; isopentenyl diphosphate biosynthesis via DXP pathway; isopentenyl diphosphate from 1-deoxy-D-xylulose 5-phosphate: step 5/6. Its function is as follows. Converts 2C-methyl-D-erythritol 2,4-cyclodiphosphate (ME-2,4cPP) into 1-hydroxy-2-methyl-2-(E)-butenyl 4-diphosphate. The sequence is that of 4-hydroxy-3-methylbut-2-en-1-yl diphosphate synthase (flavodoxin) from Ectopseudomonas mendocina (strain ymp) (Pseudomonas mendocina).